Consider the following 348-residue polypeptide: UDP-glucose 4-epimerase (348 aa).

NAD(+) contacts are provided by residues Gly12–Ile14, Asp33–Asn37, Asp66–Ile67, Phe88, and Lys92. Position 132–134 (Ser132–Thr134) interacts with substrate. Tyr157 (proton acceptor) is an active-site residue. The NAD(+) site is built by Lys161 and Tyr185. Residues Tyr185 to Asn187, Asn206 to Leu208, Asn224 to Phe226, Arg239, and Arg300 to Asp303 each bind substrate.

This sequence belongs to the NAD(P)-dependent epimerase/dehydratase family. In terms of assembly, homodimer. The cofactor is NAD(+).

It carries out the reaction UDP-alpha-D-glucose = UDP-alpha-D-galactose. The enzyme catalyses UDP-N-acetyl-alpha-D-glucosamine = UDP-N-acetyl-alpha-D-galactosamine. It participates in carbohydrate metabolism; galactose metabolism. In terms of biological role, catalyzes two distinct but analogous reactions: the reversible epimerization of UDP-glucose to UDP-galactose and the reversible epimerization of UDP-N-acetylglucosamine to UDP-N-acetylgalactosamine. The reaction with UDP-Gal plays a critical role in the Leloir pathway of galactose catabolism in which galactose is converted to the glycolytic intermediate glucose 6-phosphate. It contributes to the catabolism of dietary galactose and enables the endogenous biosynthesis of both UDP-Gal and UDP-GalNAc when exogenous sources are limited. Both UDP-sugar interconversions are important in the synthesis of glycoproteins and glycolipids. The polypeptide is UDP-glucose 4-epimerase (Bos taurus (Bovine)).